Here is a 325-residue protein sequence, read N- to C-terminus: Glutarate 2-hydroxylase (325 aa).

His-160, Asp-162, and His-292 together coordinate Fe cation.

The protein belongs to the glutarate hydroxylase family. In terms of assembly, homotetramer. Fe(2+) serves as cofactor.

The enzyme catalyses glutarate + 2-oxoglutarate + O2 = (S)-2-hydroxyglutarate + succinate + CO2. It functions in the pathway amino-acid degradation. Its function is as follows. Acts as an alpha-ketoglutarate-dependent dioxygenase catalyzing hydroxylation of glutarate (GA) to L-2-hydroxyglutarate (L2HG). Functions in a L-lysine degradation pathway that proceeds via cadaverine, glutarate and L-2-hydroxyglutarate. This chain is Glutarate 2-hydroxylase, found in Pseudomonas putida (strain ATCC 700007 / DSM 6899 / JCM 31910 / BCRC 17059 / LMG 24140 / F1).